A 244-amino-acid polypeptide reads, in one-letter code: Exosome complex component Rrp41 (244 aa).

It belongs to the RNase PH family. Rrp41 subfamily. As to quaternary structure, component of the archaeal exosome complex. Forms a hexameric ring-like arrangement composed of 3 Rrp41-Rrp42 heterodimers. The hexameric ring associates with a trimer of Rrp4 and/or Csl4 subunits.

The protein localises to the cytoplasm. Its function is as follows. Catalytic component of the exosome, which is a complex involved in RNA degradation. Has 3'-&gt;5' exoribonuclease activity. Can also synthesize heteromeric RNA-tails. This chain is Exosome complex component Rrp41, found in Nitrosopumilus maritimus (strain SCM1).